Here is a 349-residue protein sequence, read N- to C-terminus: Phenylalanine--tRNA ligase alpha subunit (349 aa).

Residue E258 participates in Mg(2+) binding.

This sequence belongs to the class-II aminoacyl-tRNA synthetase family. Phe-tRNA synthetase alpha subunit type 1 subfamily. Tetramer of two alpha and two beta subunits. Requires Mg(2+) as cofactor.

It localises to the cytoplasm. It catalyses the reaction tRNA(Phe) + L-phenylalanine + ATP = L-phenylalanyl-tRNA(Phe) + AMP + diphosphate + H(+). This is Phenylalanine--tRNA ligase alpha subunit from Rickettsia conorii (strain ATCC VR-613 / Malish 7).